Here is a 931-residue protein sequence, read N- to C-terminus: MAASTGLSTVLKEIVQVCREVESHLATESHLDSGEGAPGKNTFPIGLEGPRKQLANAAAQLSQLVTDPREYLEQLSANHGSIAYTDLANRASVPESQLKSVLRMTAAHGFLAEVTPLEISHSPTSALIATNPSFYDWARWLTNYSVPSAYHFADATQKWGRTEVKNETAFNIAMNVEVPFFGYLKENAKMNSMFSSYMRNVASSEATSFKHMISGFDWGGLTPGSKVIDVGGSGGHGSRALASAFPGLNFVVQDLPDTIENAKAALNTDESKLHADRVRFMSHDFFTPQPVVDGDIYFLRMIIHDWPDETAITILAHLRDALKKPGARIVIMDTILPQPGTVSLLQERQLRVRDLTMMQVFNAKEREYDTWKALVEKVGLRIIHVEQPEGSNMGLLELGLADATDLKAGGNARLVFNGNMKTPSVNLNINGASTINEFAHGSTPETFAVNGIHTTDKARPNGDTTHSGQASIPNGVSARISTRPMYARDVLPVLIIGAGISGLCLAQYLHKHAIPFVVFERDPSSEHRPQGYRLKLEADAAAALRESLTAEVYSAFEASCAESAIGETDFDPISGACIKSRAGGGLAGAQGLRASYTVDRTVFRRILMTGISDKIYFGREITRYDICEDNVQSYVVATFKDGATAEGRFLVGADGTRSAIRKQLVPEHKFLDTGATCIYGKTVMTPELLARYPARALRWMTVVADRAPLIQSILIGESPLTLLSEPIRFSRDEPTASLPEDYVYWVLIGRRELFTDATNTSASSTGHGVNSDKAYNTESAQASAAQSLALTEEWHPSLRSLFELQDVSQASTMRVVSAPPKLPVWPSNSCVTLLGDAVHAMSPCGGVGANVALRDAAELGKVFASTAASNEEDAIQSVGGKASDQHDMAQQIASFEGELRKRAFGGIMRSFVGSKAMFGQRTFEELDVAEL.

Residues 1–463 are O-methyltransferase; sequence MAASTGLSTV…TTDKARPNGD (463 aa). D254 provides a ligand contact to S-adenosyl-L-methionine. H304 acts as the Proton acceptor in catalysis. Residues 455–474 form a disordered region; that stretch reads TDKARPNGDTTHSGQASIPN. A compositionally biased stretch (polar residues) spans 462–474; the sequence is GDTTHSGQASIPN. Residues 464 to 931 are FAD-dependent monooxygenase; that stretch reads TTHSGQASIP…TFEELDVAEL (468 aa). Residues E520, R604, D836, and A849 each coordinate FAD.

This sequence in the C-terminal section; belongs to the paxM FAD-dependent monooxygenase family. It in the N-terminal section; belongs to the class I-like SAM-binding methyltransferase superfamily. Cation-independent O-methyltransferase family. COMT subfamily.

The catalysed reaction is nor-toralactone + S-adenosyl-L-methionine = toralactone + S-adenosyl-L-homocysteine + H(+). The enzyme catalyses toralactone + NADH + O2 + H(+) = 1-(3,4,5-trihydroxy-7-methoxynaphthalen-2-yl)propan-2-one + CO2 + NAD(+). It functions in the pathway secondary metabolite biosynthesis. In terms of biological role, dual O-methyltransferase/FAD-dependent monooxygenase; part of the gene cluster that mediates the biosynthesis of elsinochrome C, a perelyenequinone phytotoxin structurally similar to cercosporin. The first step of elsinochrome C biosynthesis is performed by the polyketide synthase elcA which catalyzes the formation of nor-toralactone. The starter unit acyltransferase (SAT) domain of elcA initiates polyketide extension by the selective utilization of acetyl-CoA, which is elongated to the heptaketide in the beta-ketoacyl synthase (KS) domain by successive condensations with six malonyl units introduced by the malonyl acyltransferase (MAT) domain. The product template (PT) domain catalyzes C4-C9 and C2-C11 aldol cyclizations and dehydrations to a trihydroxynaphthalene, which is thought to be delivered to the thioesterase (TE) domain for product release. The bifunctional enzyme elcB then methylates nor-toralactone to toralactone before conducting an unusual oxidative aromatic ring opening. The next step in perylenequinone biosynthesis is an O-methylation at the nascent OH-6 of the elcB product performed by the O-methyltransferase elcD. The oxidative coupling of the two monomeric naphthol units in perylenequinone biosynthesis is catalyzed by the FAD-dependent monooxygenase elcE and the multicopper oxidase elcG. ElcG might catalyze the first intermolecular coupling in a regio- and stereo-selective manner via a phenol radical coupling mechanism and the elcE could forge the second C-C bond intramolecularly via a hydride transfer mechanism. The fasciclin domain-containing protein elcF might also play a role duting this step. The last piece of the puzzle in the biosynthesis of elsinochrome C is the additional annulation by enolate coupling to afford the dihydrobenzo(ghi)perylenequinone system, catalyzed by the FAD-dependent monooxygenase elcH. This is Dual O-methyltransferase/FAD-dependent monooxygenase elcB from Phaeosphaeria nodorum (strain SN15 / ATCC MYA-4574 / FGSC 10173) (Glume blotch fungus).